Here is a 382-residue protein sequence, read N- to C-terminus: 1-deoxy-D-xylulose 5-phosphate reductoisomerase (382 aa).

NADPH is bound by residues T10, G11, S12, I13, G36, and N122. K123 contributes to the 1-deoxy-D-xylulose 5-phosphate binding site. NADPH is bound at residue E124. D148 provides a ligand contact to Mn(2+). 1-deoxy-D-xylulose 5-phosphate is bound by residues S149, E150, S174, and H197. E150 lines the Mn(2+) pocket. G203 lines the NADPH pocket. 4 residues coordinate 1-deoxy-D-xylulose 5-phosphate: S210, N215, K216, and E219. E219 contributes to the Mn(2+) binding site.

Belongs to the DXR family. Requires Mg(2+) as cofactor. It depends on Mn(2+) as a cofactor.

The catalysed reaction is 2-C-methyl-D-erythritol 4-phosphate + NADP(+) = 1-deoxy-D-xylulose 5-phosphate + NADPH + H(+). It functions in the pathway isoprenoid biosynthesis; isopentenyl diphosphate biosynthesis via DXP pathway; isopentenyl diphosphate from 1-deoxy-D-xylulose 5-phosphate: step 1/6. Its function is as follows. Catalyzes the NADPH-dependent rearrangement and reduction of 1-deoxy-D-xylulose-5-phosphate (DXP) to 2-C-methyl-D-erythritol 4-phosphate (MEP). This chain is 1-deoxy-D-xylulose 5-phosphate reductoisomerase, found in Chlorobaculum tepidum (strain ATCC 49652 / DSM 12025 / NBRC 103806 / TLS) (Chlorobium tepidum).